We begin with the raw amino-acid sequence, 429 residues long: Ribosomal RNA small subunit methyltransferase B (429 aa).

S-adenosyl-L-methionine-binding positions include C254–K260, D277, D303, and D322. The active-site Nucleophile is C375. The interval A397 to D419 is disordered. The span at E400–L412 shows a compositional bias: polar residues.

This sequence belongs to the class I-like SAM-binding methyltransferase superfamily. RsmB/NOP family.

It localises to the cytoplasm. It catalyses the reaction cytidine(967) in 16S rRNA + S-adenosyl-L-methionine = 5-methylcytidine(967) in 16S rRNA + S-adenosyl-L-homocysteine + H(+). Specifically methylates the cytosine at position 967 (m5C967) of 16S rRNA. The chain is Ribosomal RNA small subunit methyltransferase B from Salmonella paratyphi A (strain ATCC 9150 / SARB42).